The following is a 60-amino-acid chain: Large ribosomal subunit protein bL32 (60 aa).

Residues 1 to 16 (MAVPKRKTSPSKRGMR) are compositionally biased toward basic residues. The tract at residues 1–60 (MAVPKRKTSPSKRGMRRSADALKAPTYVEDKNSGEMRRPHHIDLKTGMYRGRQVLTPKES) is disordered. Over residues 28 to 44 (VEDKNSGEMRRPHHIDL) the composition is skewed to basic and acidic residues.

It belongs to the bacterial ribosomal protein bL32 family.

The sequence is that of Large ribosomal subunit protein bL32 from Mesorhizobium japonicum (strain LMG 29417 / CECT 9101 / MAFF 303099) (Mesorhizobium loti (strain MAFF 303099)).